The chain runs to 613 residues: Dihydroxy-acid dehydratase (613 aa).

Asp-81 serves as a coordination point for Mg(2+). Cys-122 contributes to the [2Fe-2S] cluster binding site. Asp-123 and Lys-124 together coordinate Mg(2+). Lys-124 is subject to N6-carboxylysine. Cys-195 contacts [2Fe-2S] cluster. Glu-491 is a Mg(2+) binding site. The Proton acceptor role is filled by Ser-517.

The protein belongs to the IlvD/Edd family. Homodimer. [2Fe-2S] cluster is required as a cofactor. The cofactor is Mg(2+).

It catalyses the reaction (2R)-2,3-dihydroxy-3-methylbutanoate = 3-methyl-2-oxobutanoate + H2O. The catalysed reaction is (2R,3R)-2,3-dihydroxy-3-methylpentanoate = (S)-3-methyl-2-oxopentanoate + H2O. Its pathway is amino-acid biosynthesis; L-isoleucine biosynthesis; L-isoleucine from 2-oxobutanoate: step 3/4. The protein operates within amino-acid biosynthesis; L-valine biosynthesis; L-valine from pyruvate: step 3/4. Functions in the biosynthesis of branched-chain amino acids. Catalyzes the dehydration of (2R,3R)-2,3-dihydroxy-3-methylpentanoate (2,3-dihydroxy-3-methylvalerate) into 2-oxo-3-methylpentanoate (2-oxo-3-methylvalerate) and of (2R)-2,3-dihydroxy-3-methylbutanoate (2,3-dihydroxyisovalerate) into 2-oxo-3-methylbutanoate (2-oxoisovalerate), the penultimate precursor to L-isoleucine and L-valine, respectively. The sequence is that of Dihydroxy-acid dehydratase from Aeromonas hydrophila subsp. hydrophila (strain ATCC 7966 / DSM 30187 / BCRC 13018 / CCUG 14551 / JCM 1027 / KCTC 2358 / NCIMB 9240 / NCTC 8049).